A 192-amino-acid polypeptide reads, in one-letter code: Holliday junction branch migration complex subunit RuvA (192 aa).

A domain I region spans residues 1 to 64; it reads MIGRLTGILA…EDGHYLYGFL (64 aa). A domain II region spans residues 65–143; the sequence is TEAERFAFRQ…DATGVSLHPA (79 aa). The segment at 144–149 is flexible linker; sequence VDDSKQ. Residues 149-192 form a domain III region; it reads QDISNALLALGYNEKEAASAMKQLPADVSTSDGIRAALKLLSKV.

It belongs to the RuvA family. As to quaternary structure, homotetramer. Forms an RuvA(8)-RuvB(12)-Holliday junction (HJ) complex. HJ DNA is sandwiched between 2 RuvA tetramers; dsDNA enters through RuvA and exits via RuvB. An RuvB hexamer assembles on each DNA strand where it exits the tetramer. Each RuvB hexamer is contacted by two RuvA subunits (via domain III) on 2 adjacent RuvB subunits; this complex drives branch migration. In the full resolvosome a probable DNA-RuvA(4)-RuvB(12)-RuvC(2) complex forms which resolves the HJ.

It localises to the cytoplasm. In terms of biological role, the RuvA-RuvB-RuvC complex processes Holliday junction (HJ) DNA during genetic recombination and DNA repair, while the RuvA-RuvB complex plays an important role in the rescue of blocked DNA replication forks via replication fork reversal (RFR). RuvA specifically binds to HJ cruciform DNA, conferring on it an open structure. The RuvB hexamer acts as an ATP-dependent pump, pulling dsDNA into and through the RuvAB complex. HJ branch migration allows RuvC to scan DNA until it finds its consensus sequence, where it cleaves and resolves the cruciform DNA. The polypeptide is Holliday junction branch migration complex subunit RuvA (Dechloromonas aromatica (strain RCB)).